The primary structure comprises 209 residues: Hydrogenase expression/formation protein HupM (209 aa).

Residues E21, D67, and H98 each contribute to the Ni(2+) site.

This sequence belongs to the peptidase A31 family.

Functionally, not known. Could be involved in the processing of hydrogenase. The chain is Hydrogenase expression/formation protein HupM (hupM) from Azotobacter chroococcum mcd 1.